Reading from the N-terminus, the 92-residue chain is MPRSLKKGPFIDLHLLKKVEKAMESGEKKPIKTWSRRSMIIPDMIGLTIAVHNGRQHVPVFVTDEMVGQKLGEFAPTRTYRGHTSDKKTKKK.

This sequence belongs to the universal ribosomal protein uS19 family.

Protein S19 forms a complex with S13 that binds strongly to the 16S ribosomal RNA. The chain is Small ribosomal subunit protein uS19 from Psychromonas ingrahamii (strain DSM 17664 / CCUG 51855 / 37).